A 431-amino-acid polypeptide reads, in one-letter code: Adenylosuccinate lyase (431 aa).

N(6)-(1,2-dicarboxyethyl)-AMP-binding positions include 4–5 (RY), 67–69 (NHD), and 93–94 (TS). Catalysis depends on His-141, which acts as the Proton donor/acceptor. A N(6)-(1,2-dicarboxyethyl)-AMP-binding site is contributed by Gln-212. Catalysis depends on Ser-262, which acts as the Proton donor/acceptor. Residues Ser-263, 268–270 (KKN), and 307–311 (SVERY) contribute to the N(6)-(1,2-dicarboxyethyl)-AMP site.

This sequence belongs to the lyase 1 family. Adenylosuccinate lyase subfamily. As to quaternary structure, homotetramer. Residues from neighboring subunits contribute catalytic and substrate-binding residues to each active site.

The enzyme catalyses N(6)-(1,2-dicarboxyethyl)-AMP = fumarate + AMP. It carries out the reaction (2S)-2-[5-amino-1-(5-phospho-beta-D-ribosyl)imidazole-4-carboxamido]succinate = 5-amino-1-(5-phospho-beta-D-ribosyl)imidazole-4-carboxamide + fumarate. It participates in purine metabolism; AMP biosynthesis via de novo pathway; AMP from IMP: step 2/2. The protein operates within purine metabolism; IMP biosynthesis via de novo pathway; 5-amino-1-(5-phospho-D-ribosyl)imidazole-4-carboxamide from 5-amino-1-(5-phospho-D-ribosyl)imidazole-4-carboxylate: step 2/2. In terms of biological role, catalyzes two reactions in de novo purine nucleotide biosynthesis. Catalyzes the breakdown of 5-aminoimidazole- (N-succinylocarboxamide) ribotide (SAICAR or 2-[5-amino-1-(5-phospho-beta-D-ribosyl)imidazole-4-carboxamido]succinate) to 5-aminoimidazole-4-carboxamide ribotide (AICAR or 5-amino-1-(5-phospho-beta-D-ribosyl)imidazole-4-carboxamide) and fumarate, and of adenylosuccinate (ADS or N(6)-(1,2-dicarboxyethyl)-AMP) to adenosine monophosphate (AMP) and fumarate. This chain is Adenylosuccinate lyase (purB), found in Thermotoga maritima (strain ATCC 43589 / DSM 3109 / JCM 10099 / NBRC 100826 / MSB8).